Here is a 367-residue protein sequence, read N- to C-terminus: Dual-specificity RNA methyltransferase RlmN (367 aa).

The Proton acceptor role is filled by glutamate 93. Positions 99-333 (EEDRATLCVS…VIVRKTRGDD (235 aa)) constitute a Radical SAM core domain. Cysteine 106 and cysteine 338 form a disulfide bridge. [4Fe-4S] cluster is bound by residues cysteine 113, cysteine 117, and cysteine 120. S-adenosyl-L-methionine contacts are provided by residues 162–163 (GE), serine 194, 216–218 (SLH), and asparagine 295. Cysteine 338 acts as the S-methylcysteine intermediate in catalysis.

The protein belongs to the radical SAM superfamily. RlmN family. Requires [4Fe-4S] cluster as cofactor.

The protein localises to the cytoplasm. It catalyses the reaction adenosine(2503) in 23S rRNA + 2 reduced [2Fe-2S]-[ferredoxin] + 2 S-adenosyl-L-methionine = 2-methyladenosine(2503) in 23S rRNA + 5'-deoxyadenosine + L-methionine + 2 oxidized [2Fe-2S]-[ferredoxin] + S-adenosyl-L-homocysteine. The enzyme catalyses adenosine(37) in tRNA + 2 reduced [2Fe-2S]-[ferredoxin] + 2 S-adenosyl-L-methionine = 2-methyladenosine(37) in tRNA + 5'-deoxyadenosine + L-methionine + 2 oxidized [2Fe-2S]-[ferredoxin] + S-adenosyl-L-homocysteine. Its function is as follows. Specifically methylates position 2 of adenine 2503 in 23S rRNA and position 2 of adenine 37 in tRNAs. m2A2503 modification seems to play a crucial role in the proofreading step occurring at the peptidyl transferase center and thus would serve to optimize ribosomal fidelity. The polypeptide is Dual-specificity RNA methyltransferase RlmN (Aeromonas hydrophila subsp. hydrophila (strain ATCC 7966 / DSM 30187 / BCRC 13018 / CCUG 14551 / JCM 1027 / KCTC 2358 / NCIMB 9240 / NCTC 8049)).